The chain runs to 327 residues: Malate dehydrogenase 1 (327 aa).

Position 12–18 (12–18) interacts with NAD(+); the sequence is GAAGQIA. Residues Arg93 and Arg99 each contribute to the substrate site. NAD(+) contacts are provided by residues Asn106, Gln113, and 130–132; that span reads VGN. Asn132 and Arg163 together coordinate substrate. The Proton acceptor role is filled by His188.

Belongs to the LDH/MDH superfamily. MDH type 2 family.

The enzyme catalyses (S)-malate + NAD(+) = oxaloacetate + NADH + H(+). Functionally, catalyzes the reversible oxidation of malate to oxaloacetate. The chain is Malate dehydrogenase 1 from Burkholderia thailandensis (strain ATCC 700388 / DSM 13276 / CCUG 48851 / CIP 106301 / E264).